A 94-amino-acid polypeptide reads, in one-letter code: Small ribosomal subunit protein bS20 (94 aa).

It belongs to the bacterial ribosomal protein bS20 family.

In terms of biological role, binds directly to 16S ribosomal RNA. In Acaryochloris marina (strain MBIC 11017), this protein is Small ribosomal subunit protein bS20.